The chain runs to 522 residues: DEAD-box ATP-dependent RNA helicase 1 (522 aa).

Residues 30 to 59 (CALDTLPCLNPKLKKALENMGISSLFPVQV) carry the Q motif motif. The region spanning 66–297 (IGPGGFERDI…QLDLHHPLFM (232 aa)) is the Helicase ATP-binding domain. Residue 79-86 (SPTGSGKT) coordinates ATP. The DEAD box motif lies at 207 to 210 (DETD). The Helicase C-terminal domain maps to 325–475 (YLVALLKSWE…PIPPTSLDSI (151 aa)). The segment at 490 to 522 (VESEAPKKGRQAFRHNSRTGNSQTKLNKPRSEA) is disordered. Residues 497 to 506 (KGRQAFRHNS) show a composition bias toward basic residues.

Belongs to the DEAD box helicase family. DDX51/DBP6 subfamily.

It catalyses the reaction ATP + H2O = ADP + phosphate + H(+). The chain is DEAD-box ATP-dependent RNA helicase 1 (RH1) from Arabidopsis thaliana (Mouse-ear cress).